Here is a 476-residue protein sequence, read N- to C-terminus: MNGYGSPYLYMGGPVSQPPRAPLQRTPKCARCRNHGVLSWLKGHKRYCRFKDCTCEKCILIIERQRVMAAQVALRRQQANESLESLIPDSLRALPGPPPPGDAAATAATASQSSPASQASQPPAPPRPATELAAAAALRWVAEPQPGTLPAQIAKPDLTEDRLGDSSSADNAAESFSDKDTDQRSSPDVVKSKNCFTPESPEIVSVDEGGYAVQKNGGNPESCPDSPKYHAEQSHLLIEGPSGTVSLPFSLKANRPPLEVLKKIFPNQKPTVLELILKGCGGDLVSAVEVLLSSRSSAAGAERTAEESLVLPSSGHIFEHTLGSYPISSSKWSVGSAFRVPDTLRFSADSSNVVPNPLAVPLQHPFPQPPRYPLMLRNTLARNQSSPFLPNDVTLWNTMTLQQQYQLRSQYVSPFPSNSTSVFRSSPVLSSRTTEDPRISIPDDGCPIVAKQSIYTEDDYDERSDSSDSRILNTSS.

A DNA-binding region (DM) is located at residues 29–76; the sequence is CARCRNHGVLSWLKGHKRYCRFKDCTCEKCILIIERQRVMAAQVALRR. Disordered regions lie at residues 89 to 130 and 147 to 195; these read DSLR…RPAT and GTLP…SKNC. Over residues 102 to 121 the composition is skewed to low complexity; that stretch reads DAAATAATASQSSPASQASQ. Residues 176–185 show a composition bias toward basic and acidic residues; that stretch reads FSDKDTDQRS. Residues 255-290 enclose the DMA domain; it reads RPPLEVLKKIFPNQKPTVLELILKGCGGDLVSAVEV. Polar residues predominate over residues 418 to 432; it reads NSTSVFRSSPVLSSR. The segment at 418–476 is disordered; it reads NSTSVFRSSPVLSSRTTEDPRISIPDDGCPIVAKQSIYTEDDYDERSDSSDSRILNTSS.

It belongs to the DMRT family.

The protein localises to the nucleus. Probable transcription factor that plays a role in configuring the spinal circuits controlling stride in vertebrates. Involved in neuronal specification within a specific subdivision of spinal cord neurons and in the development of a coordinated locomotor network controlling limb movements. May regulate transcription during sexual development. This is Doublesex and mab-3 related transcription factor 3 (Dmrt3) from Rattus norvegicus (Rat).